Here is a 281-residue protein sequence, read N- to C-terminus: Large ribosomal subunit protein mL46 (281 aa).

The transit peptide at 1–19 (MKVNLMLKRGLATATATAS) directs the protein to the mitochondrion. Residues 106–118 (RERSTKQEVKLSD) show a composition bias toward basic and acidic residues. Positions 106 to 141 (RERSTKQEVKLSDDSTVAFSNNQKEQSKDDVNRPVI) are disordered. The segment covering 119–129 (DSTVAFSNNQK) has biased composition (polar residues).

The protein belongs to the mitochondrion-specific ribosomal protein mL46 family. As to quaternary structure, component of the mitochondrial large ribosomal subunit (mt-LSU). Mature yeast 74S mitochondrial ribosomes consist of a small (37S) and a large (54S) subunit. The 37S small subunit contains a 15S ribosomal RNA (15S mt-rRNA) and 34 different proteins. The 54S large subunit contains a 21S rRNA (21S mt-rRNA) and 46 different proteins.

Its subcellular location is the mitochondrion. In terms of biological role, component of the mitochondrial ribosome (mitoribosome), a dedicated translation machinery responsible for the synthesis of mitochondrial genome-encoded proteins, including at least some of the essential transmembrane subunits of the mitochondrial respiratory chain. The mitoribosomes are attached to the mitochondrial inner membrane and translation products are cotranslationally integrated into the membrane. The chain is Large ribosomal subunit protein mL46 (MRPL17) from Saccharomyces cerevisiae (strain ATCC 204508 / S288c) (Baker's yeast).